A 316-amino-acid chain; its full sequence is Ferrochelatase (316 aa).

Fe cation-binding residues include histidine 186 and glutamate 268.

This sequence belongs to the ferrochelatase family.

The protein localises to the cytoplasm. The enzyme catalyses heme b + 2 H(+) = protoporphyrin IX + Fe(2+). Its pathway is porphyrin-containing compound metabolism; protoheme biosynthesis; protoheme from protoporphyrin-IX: step 1/1. Functionally, catalyzes the ferrous insertion into protoporphyrin IX. The chain is Ferrochelatase from Deinococcus radiodurans (strain ATCC 13939 / DSM 20539 / JCM 16871 / CCUG 27074 / LMG 4051 / NBRC 15346 / NCIMB 9279 / VKM B-1422 / R1).